Reading from the N-terminus, the 965-residue chain is Vacuolar membrane protease (965 aa).

Residues 1 to 16 (MARPSLSPSNPLGFTP) lie on the Cytoplasmic side of the membrane. Residues 17–37 (WPVTVITAVVYLALVVPLLVV) traverse the membrane as a helical segment. Residues 38-387 (HHVVPSAPSS…SAFVVFELHT (350 aa)) are Vacuolar-facing. Asn53 and Asn119 each carry an N-linked (GlcNAc...) asparagine glycan. Residues His171 and Asp183 each contribute to the Zn(2+) site. Glu217 (proton acceptor) is an active-site residue. Residues Glu218, Glu243, and His316 each coordinate Zn(2+). A helical membrane pass occupies residues 388-408 (LFALSVTLLVVAPLVLLVTSI). Topologically, residues 409–441 (ALARADKMYLFRSSASPEDSDGSEVVPLHGVRG) are cytoplasmic. The helical transmembrane segment at 442 to 462 (FFRFPFLLVIPTAVTVGLAYL) threads the bilayer. Residues 463–472 (VTKFNPYIIH) are Vacuolar-facing. The helical transmembrane segment at 473-493 (SSEYAVWSMMISAWVFLAWFV) threads the bilayer. Residues 494 to 507 (SRVADFARPSAFHR) are Cytoplasmic-facing. The helical transmembrane segment at 508–528 (VYTLTWLFLVEWVFLVISTVY) threads the bilayer. Topologically, residues 529–532 (ENQY) are vacuolar. The helical transmembrane segment at 533 to 553 (GLAGGYFVLFVFAGTFLATWI) threads the bilayer. Residues 554-661 (SYLELFALPR…WSIHLPKWVW (108 aa)) lie on the Cytoplasmic side of the membrane. Residues 577–610 (RTSSHGSRLGTASGEDVEDGEDEDDDGTTAEATE) are disordered. Positions 591–604 (EDVEDGEDEDDDGT) are enriched in acidic residues. A helical membrane pass occupies residues 662–682 (VLQFLLTAPLVLIFVGPLALL). The Vacuolar segment spans residues 683–698 (LTSALRQTGQDGSPSL). Residues 699–719 (FIYIAVAALTTLLFIPLLPFI) form a helical membrane-spanning segment. The Cytoplasmic segment spans residues 720–725 (HRYTHH). The chain crosses the membrane as a helical span at residues 726 to 746 (IPLFLLCVFAGTLIYNLVAFP). At 747 to 965 (FSPANRLKLF…LVEGSRRFEV (219 aa)) the chain is on the vacuolar side. N-linked (GlcNAc...) asparagine glycans are attached at residues Asn793 and Asn830.

It belongs to the peptidase M28 family. The cofactor is Zn(2+).

Its subcellular location is the vacuole membrane. In terms of biological role, may be involved in vacuolar sorting and osmoregulation. The protein is Vacuolar membrane protease of Aspergillus fumigatus (strain CBS 144.89 / FGSC A1163 / CEA10) (Neosartorya fumigata).